The sequence spans 384 residues: S-adenosylmethionine synthase (384 aa).

Histidine 16 is an ATP binding site. Aspartate 18 is a binding site for Mg(2+). Glutamate 44 lines the K(+) pocket. Residues glutamate 57 and glutamine 100 each coordinate L-methionine. The tract at residues 100 to 110 is flexible loop; it reads QSADIAMGVDE. Residues 165–167, aspartate 240, 246–247, alanine 263, and lysine 267 contribute to the ATP site; these read DAK and RK. Aspartate 240 contributes to the L-methionine binding site. Position 271 (lysine 271) interacts with L-methionine.

This sequence belongs to the AdoMet synthase family. Homotetramer; dimer of dimers. It depends on Mg(2+) as a cofactor. K(+) is required as a cofactor.

The protein resides in the cytoplasm. The catalysed reaction is L-methionine + ATP + H2O = S-adenosyl-L-methionine + phosphate + diphosphate. The protein operates within amino-acid biosynthesis; S-adenosyl-L-methionine biosynthesis; S-adenosyl-L-methionine from L-methionine: step 1/1. Functionally, catalyzes the formation of S-adenosylmethionine (AdoMet) from methionine and ATP. The overall synthetic reaction is composed of two sequential steps, AdoMet formation and the subsequent tripolyphosphate hydrolysis which occurs prior to release of AdoMet from the enzyme. This Teredinibacter turnerae (strain ATCC 39867 / T7901) protein is S-adenosylmethionine synthase.